The following is a 251-amino-acid chain: Large ribosomal subunit protein uL2 (251 aa).

Residues 1–12 (MGKRLRVQRHGR) show a composition bias toward basic residues. The interval 1–22 (MGKRLRVQRHGRGTPQWRNRGH) is disordered.

It belongs to the universal ribosomal protein uL2 family. In terms of assembly, part of the 50S ribosomal subunit. Forms a bridge to the 30S subunit in the 70S ribosome.

Its function is as follows. One of the primary rRNA binding proteins. Required for association of the 30S and 50S subunits to form the 70S ribosome, for tRNA binding and peptide bond formation. It has been suggested to have peptidyltransferase activity; this is somewhat controversial. Makes several contacts with the 16S rRNA in the 70S ribosome. This Ignicoccus hospitalis (strain KIN4/I / DSM 18386 / JCM 14125) protein is Large ribosomal subunit protein uL2.